A 353-amino-acid chain; its full sequence is GTPase Obg (353 aa).

The region spanning 1-159 (MKFLDEAKVY…RWIWLRLKLI (159 aa)) is the Obg domain. The 168-residue stretch at 160–327 (ADAGLVGLPN…ALRALVAVIG (168 aa)) folds into the OBG-type G domain. GTP contacts are provided by residues 166–173 (GLPNAGKS), 191–195 (FTTLH), 212–215 (DIPG), 279–282 (NKID), and 308–310 (SGV). 2 residues coordinate Mg(2+): serine 173 and threonine 193.

The protein belongs to the TRAFAC class OBG-HflX-like GTPase superfamily. OBG GTPase family. Monomer. It depends on Mg(2+) as a cofactor.

The protein localises to the cytoplasm. Functionally, an essential GTPase which binds GTP, GDP and possibly (p)ppGpp with moderate affinity, with high nucleotide exchange rates and a fairly low GTP hydrolysis rate. Plays a role in control of the cell cycle, stress response, ribosome biogenesis and in those bacteria that undergo differentiation, in morphogenesis control. The polypeptide is GTPase Obg (Rhodopseudomonas palustris (strain ATCC BAA-98 / CGA009)).